A 276-amino-acid polypeptide reads, in one-letter code: Rho-related protein racO (276 aa).

11 to 18 contributes to the GTP binding site; it reads GDGLIGKT. Positions 34-42 match the Effector region motif; the sequence is YSSFDSEYL. GTP is bound by residues 60-64 and 124-127; these read ENDGF and IKTD. The tract at residues 199–276 is disordered; the sequence is FKNNNNNNNY…NKTTNKCKIS (78 aa). Residues 200-270 show a composition bias toward low complexity; that stretch reads KNNNNNNNYN…SYKNHNNKTT (71 aa). Position 273 is a cysteine methyl ester (cysteine 273). A lipid anchor (S-geranylgeranyl cysteine) is attached at cysteine 273. A propeptide spans 274–276 (removed in mature form); it reads KIS.

The protein belongs to the small GTPase superfamily. Rho family.

Its subcellular location is the cell membrane. In Dictyostelium discoideum (Social amoeba), this protein is Rho-related protein racO (racO).